The following is a 973-amino-acid chain: Protein HypA (973 aa).

The chain is Protein HypA (hypA) from Clostridium perfringens (strain 13 / Type A).